The sequence spans 422 residues: Zinc finger protein zfp-2 (422 aa).

The disordered stretch occupies residues 95–119 (AIPCTSSSMQPSTSSNPSSGEHQPV). The segment covering 99–113 (TSSSMQPSTSSNPSS) has biased composition (low complexity). C2H2-type zinc fingers lie at residues 171–194 (YRCT…QEVH), 200–222 (FRCF…LKDH), 229–251 (FSCD…HKMH), 255–278 (STCQ…STAH), 300–322 (YSCS…ERIH), 328–350 (YSCG…IRTH), and 356–379 (YGCG…LAAH).

As to expression, expressed in vulval cells and all somatic gonad structures such as spermatheca, sheath cells, uterine cells and distal tip cells.

The protein resides in the nucleus. Functionally, probable zinc finger transcription factor that acts as a transcriptional repressor. Acts redundantly with the transcriptional repressor lin-35 to control the development of somatic gonad lineages. May, in addition, suppress sensitivity to RNAi. The chain is Zinc finger protein zfp-2 from Caenorhabditis elegans.